The primary structure comprises 301 residues: Probable 2-oxoglutarate-dependent dioxygenase AOP1 (301 aa).

Positions 158 to 262 (TYYLTRLMKY…RYSTGLFSIP (105 aa)) constitute a Fe2OG dioxygenase domain. Fe cation contacts are provided by histidine 186, aspartate 188, and histidine 243. Position 253 (arginine 253) interacts with 2-oxoglutarate.

It belongs to the iron/ascorbate-dependent oxidoreductase family. Requires Fe(2+) as cofactor.

Probable 2-oxoglutarate-dependent dioxygenase that may be involved in glucosinolates biosynthesis. May play a role in the production of aliphatic glucosinolates. The sequence is that of Probable 2-oxoglutarate-dependent dioxygenase AOP1 (AOP1) from Arabidopsis thaliana (Mouse-ear cress).